The following is a 393-amino-acid chain: GTP exchange factor for ARFs 1 (393 aa).

The span at 1 to 12 (MSSRYSERNGLS) shows a compositional bias: polar residues. The segment at 1–21 (MSSRYSERNGLSETEKMTLPK) is disordered. Residues 12-54 (SETEKMTLPKVRKRKAQLVDEIEALKNEVREVDEELDQVYYTH) are a coiled coil. In terms of domain architecture, SEC7 spans 53 to 239 (THPKSKEYHK…TEVYESVSVT (187 aa)). The PH domain occupies 261 to 377 (HAEREGWLFK…MRSWINAISR (117 aa)).

Promotes guanine-nucleotide exchange on ARF. Promotes the activation of ARF through replacement of GDP with GTP. Plays a role in cell shedding during embryogenesis, probably by promoting the endocytosis of cell adhesion molecules. The sequence is that of GTP exchange factor for ARFs 1 (grp-1) from Caenorhabditis elegans.